The chain runs to 907 residues: Protein translocase subunit SecA (907 aa).

ATP-binding positions include Q87, 105–109 (GEGKT), and D513. Residues 841–853 (EAQRRAQAEEAAR) are compositionally biased toward basic and acidic residues. Residues 841-907 (EAQRRAQAEE…KYKQCHGQIN (67 aa)) are disordered. Residues 854–865 (RAQAQHASAQSQ) show a composition bias toward low complexity. Positions 872–887 (EGHHQPVVRDERKVGR) are enriched in basic and acidic residues. Residues C891, C893, C902, and H903 each coordinate Zn(2+).

This sequence belongs to the SecA family. Monomer and homodimer. Part of the essential Sec protein translocation apparatus which comprises SecA, SecYEG and auxiliary proteins SecDF-YajC and YidC. Requires Zn(2+) as cofactor.

The protein resides in the cell inner membrane. Its subcellular location is the cytoplasm. The catalysed reaction is ATP + H2O + cellular proteinSide 1 = ADP + phosphate + cellular proteinSide 2.. In terms of biological role, part of the Sec protein translocase complex. Interacts with the SecYEG preprotein conducting channel. Has a central role in coupling the hydrolysis of ATP to the transfer of proteins into and across the cell membrane, serving both as a receptor for the preprotein-SecB complex and as an ATP-driven molecular motor driving the stepwise translocation of polypeptide chains across the membrane. The chain is Protein translocase subunit SecA from Vibrio vulnificus (strain YJ016).